Consider the following 202-residue polypeptide: Shikimate kinase (202 aa).

An ATP-binding site is contributed by 20–25 (GSGKST). A Mg(2+)-binding site is contributed by Ser-24. Substrate is bound by residues Asp-42, Arg-66, and Gly-88. Arg-126 is an ATP binding site. Arg-153 lines the substrate pocket.

This sequence belongs to the shikimate kinase family. Monomer. Mg(2+) serves as cofactor.

Its subcellular location is the cytoplasm. The catalysed reaction is shikimate + ATP = 3-phosphoshikimate + ADP + H(+). Its pathway is metabolic intermediate biosynthesis; chorismate biosynthesis; chorismate from D-erythrose 4-phosphate and phosphoenolpyruvate: step 5/7. Catalyzes the specific phosphorylation of the 3-hydroxyl group of shikimic acid using ATP as a cosubstrate. The chain is Shikimate kinase from Chlorobium luteolum (strain DSM 273 / BCRC 81028 / 2530) (Pelodictyon luteolum).